The following is an 839-amino-acid chain: Thymine dioxygenase JBP1 (839 aa).

The thymine dioxygenase stretch occupies residues 86–288; the sequence is KVCGVLIPKA…RLSCVFYYRA (203 aa). The Fe cation site is built by His213, Asp215, and His263. Residue Arg279 participates in 2-oxoglutarate binding. The interval 415–583 is DNA-binding JBP1 domain; sequence KGDILNEAMN…EIEQARRRAP (169 aa).

It belongs to the TET family. JBP1 subfamily. Monomer. Binds to DNA as a monomer. Fe(2+) is required as a cofactor.

It is found in the nucleus. It carries out the reaction thymine + 2-oxoglutarate + O2 = 5-hydroxymethyluracil + succinate + CO2. In terms of biological role, dioxygenase that catalyzes the first step of DNA base J (beta-d-glucosyl-HOMedU) biosynthesis by converting thymine to 5-hydroxymethyluracil (HOMedU). DNA base J is a hypermodified thymidine residue found in the genome of kinetoplastid parasites, which is localized primarily to repetitive DNA, namely the telomeres, and is implicated in the regulation of antigenic variation. Also specifically binds to base J-containing DNA (J-DNA). Involved in propagation and maintenance of DNA base J synthesis initiated by JBP2 by specifically binding already synthesized DNA base J and propagating J synthesis. Thymine dioxygenase activity and J-DNA-binding are independent functions. The sequence is that of Thymine dioxygenase JBP1 (JBP1) from Trypanosoma brucei brucei (strain 927/4 GUTat10.1).